A 197-amino-acid chain; its full sequence is Holliday junction branch migration complex subunit RuvA (197 aa).

The interval 1–65 is domain I; that stretch reads MISQVRGTIM…EDAWHLYGFA (65 aa). Residues 66–140 form a domain II region; the sequence is HAYERAVFQK…DKIDAVGPAP (75 aa). The interval 140-144 is flexible linker; the sequence is PATGT. The domain III stretch occupies residues 145–197; it reads APSPLGDDAVRALIALGYNQTEADRAVRAVVESGAPKDVSSLVRGALSRLTAK.

This sequence belongs to the RuvA family. Homotetramer. Forms an RuvA(8)-RuvB(12)-Holliday junction (HJ) complex. HJ DNA is sandwiched between 2 RuvA tetramers; dsDNA enters through RuvA and exits via RuvB. An RuvB hexamer assembles on each DNA strand where it exits the tetramer. Each RuvB hexamer is contacted by two RuvA subunits (via domain III) on 2 adjacent RuvB subunits; this complex drives branch migration. In the full resolvosome a probable DNA-RuvA(4)-RuvB(12)-RuvC(2) complex forms which resolves the HJ.

Its subcellular location is the cytoplasm. Its function is as follows. The RuvA-RuvB-RuvC complex processes Holliday junction (HJ) DNA during genetic recombination and DNA repair, while the RuvA-RuvB complex plays an important role in the rescue of blocked DNA replication forks via replication fork reversal (RFR). RuvA specifically binds to HJ cruciform DNA, conferring on it an open structure. The RuvB hexamer acts as an ATP-dependent pump, pulling dsDNA into and through the RuvAB complex. HJ branch migration allows RuvC to scan DNA until it finds its consensus sequence, where it cleaves and resolves the cruciform DNA. This Gemmatimonas aurantiaca (strain DSM 14586 / JCM 11422 / NBRC 100505 / T-27) protein is Holliday junction branch migration complex subunit RuvA.